We begin with the raw amino-acid sequence, 1187 residues long: Nicotinate dehydrogenase subunit B (1187 aa).

A helical membrane pass occupies residues 764–784; sequence WWFGSLAGVFGAALGMLATAL. Cytochrome c domains follow at residues 804–907, 949–1057, and 1075–1163; these read AMLE…MSQT, AQWN…SSLE, and VSLS…RHRF. C818, C821, H822, C964, C967, H968, C1088, C1091, and H1092 together coordinate heme c.

It depends on Mo-molybdopterin cytosine dinucleotide as a cofactor.

Its subcellular location is the membrane. The catalysed reaction is 2 Fe(III)-[cytochrome] + nicotinate + H2O = 2 Fe(II)-[cytochrome] + 6-hydroxynicotinate + 2 H(+). The protein operates within cofactor degradation; nicotinate degradation. Subunit of the two-component enzyme NicAB that mediates nicotinate hydroxylation, the first step in the aerobic nicotinate degradation pathway. Mediates conversion of nicotinate into 6-hydroxynicotinate (6HNA). This chain is Nicotinate dehydrogenase subunit B (nicB), found in Pseudomonas putida (strain ATCC 47054 / DSM 6125 / CFBP 8728 / NCIMB 11950 / KT2440).